A 589-amino-acid polypeptide reads, in one-letter code: LRR receptor-like serine/threonine-protein kinase FEI 2 (589 aa).

A signal peptide spans Met1 to Ala28. The Extracellular portion of the chain corresponds to Ile29–Arg236. LRR repeat units follow at residues Thr72–Leu96, Asp97–Cys120, Ala122–Leu144, Ser145–Leu168, and Arg170–Arg193. 2 N-linked (GlcNAc...) asparagine glycosylation sites follow: Asn119 and Asn143. Residues Asn175, Asn215, and Asn219 are each glycosylated (N-linked (GlcNAc...) asparagine). The chain crosses the membrane as a helical span at residues Leu237–Trp257. Topologically, residues Gly258–Asp589 are cytoplasmic. The Protein kinase domain maps to Leu304–Met576. ATP is bound by residues Ile310 to Val318 and Lys332. The residue at position 384 (Ser384) is a Phosphoserine. Asp427 serves as the catalytic Proton acceptor. A phosphothreonine mark is found at Thr460, Thr461, and Thr466. Phosphotyrosine is present on Tyr474.

It belongs to the protein kinase superfamily. Ser/Thr protein kinase family. In terms of assembly, interacts with the ACC synthases ACS5 and ACS9 but not ACS2, via the kinase domain. Post-translationally, autophosphorylated. In terms of tissue distribution, expressed in the root meristem and elongation zone, and in hypocotyls of etiolated seedlings.

Its subcellular location is the cell membrane. The enzyme catalyses L-seryl-[protein] + ATP = O-phospho-L-seryl-[protein] + ADP + H(+). It catalyses the reaction L-threonyl-[protein] + ATP = O-phospho-L-threonyl-[protein] + ADP + H(+). Its function is as follows. Involved in the signaling pathway that regulates cell wall function, including cellulose biosynthesis, likely via an 1-aminocyclopropane-1-carboxylic acid (ACC)-mediated signal (a precursor of ethylene). In Arabidopsis thaliana (Mouse-ear cress), this protein is LRR receptor-like serine/threonine-protein kinase FEI 2 (FEI2).